Reading from the N-terminus, the 21-residue chain is Ocellatin-4 (21 aa).

Isoleucine 21 carries the isoleucine amide modification.

In terms of tissue distribution, expressed by the skin dorsal glands.

Its subcellular location is the secreted. In terms of biological role, has hemolytic activity against human erythrocytes (HC50=14.3 uM). Has antibacterial activity against the Gram-positive bacterium S.aureus ATCC 25923 (MIC=64 uM) and the Gram-negative bacterium E.coli ATCC 25922 (MIC=64 uM). The polypeptide is Ocellatin-4 (Leptodactylus ocellatus (Argus frog)).